Reading from the N-terminus, the 261-residue chain is Thiazole synthase (261 aa).

The active-site Schiff-base intermediate with DXP is the K95. Residues G156, 182–183, and 204–205 each bind 1-deoxy-D-xylulose 5-phosphate; these read AG and NT.

This sequence belongs to the ThiG family. Homotetramer. Forms heterodimers with either ThiH or ThiS.

The protein localises to the cytoplasm. It catalyses the reaction [ThiS sulfur-carrier protein]-C-terminal-Gly-aminoethanethioate + 2-iminoacetate + 1-deoxy-D-xylulose 5-phosphate = [ThiS sulfur-carrier protein]-C-terminal Gly-Gly + 2-[(2R,5Z)-2-carboxy-4-methylthiazol-5(2H)-ylidene]ethyl phosphate + 2 H2O + H(+). The protein operates within cofactor biosynthesis; thiamine diphosphate biosynthesis. Catalyzes the rearrangement of 1-deoxy-D-xylulose 5-phosphate (DXP) to produce the thiazole phosphate moiety of thiamine. Sulfur is provided by the thiocarboxylate moiety of the carrier protein ThiS. In vitro, sulfur can be provided by H(2)S. In Pectobacterium carotovorum subsp. carotovorum (strain PC1), this protein is Thiazole synthase.